The primary structure comprises 359 residues: Palmitoyltransferase ERF2 (359 aa).

The disordered stretch occupies residues 1 to 21; the sequence is MALVSRRSTRSESTSITKEEH. At 1-75 the chain is on the cytoplasmic side; that stretch reads MALVSRRSTR…RFRTVKGAKP (75 aa). The chain crosses the membrane as a helical span at residues 76–96; the sequence is LWLGVLLAIVCPMVLFSIFEA. Topologically, residues 97–104 are lumenal; sequence HKLWHTQN. The helical transmembrane segment at 105–125 threads the bilayer; the sequence is GYKVLVIFFYYFWVITLASFI. Topologically, residues 126-217 are cytoplasmic; it reads RTATSDPGVL…NCIGKRNYRF (92 aa). In terms of domain architecture, DHHC spans 173 to 223; it reads KYCPSCRIWRPPRSSHCSTCNVCVMVHDHHCIWVNNCIGKRNYRFFLIFLL. Cysteine 203 serves as the catalytic S-palmitoyl cysteine intermediate. A helical membrane pass occupies residues 218 to 238; the sequence is FLIFLLGAILSSVILLTNCAI. Topologically, residues 239–250 are lumenal; sequence HIARESGGPRDC. A helical membrane pass occupies residues 251–271; it reads PVAILLLCYAGLTLWYPAILF. Residues 272–359 lie on the Cytoplasmic side of the membrane; the sequence is TYHIFMAGNQ…AHSFEKIQKI (88 aa).

It belongs to the DHHC palmitoyltransferase family. ERF2/ZDHHC9 subfamily. Interacts with SHR5. Post-translationally, autopalmitoylated.

Its subcellular location is the endoplasmic reticulum membrane. The catalysed reaction is L-cysteinyl-[protein] + hexadecanoyl-CoA = S-hexadecanoyl-L-cysteinyl-[protein] + CoA. In terms of biological role, the ERF2-SHR5 complex is a palmitoyltransferase specific for Ras proteins. Palmitoylates RAS2, which is required for its proper plasma membrane localization. This is Palmitoyltransferase ERF2 (ERF2) from Saccharomyces cerevisiae (strain ATCC 204508 / S288c) (Baker's yeast).